The sequence spans 568 residues: MMPATLAGLALAVTVATMFAQRVDSTTIHHVSGLKGKPLLFGPSLRRTLPAGGTFKWVLVLSDPCAPKPTEICVSVGHCFYDLVSSDNDSECANKDRRVLTLALLTKSKTGELRVIGPMAASSALVGDAGELEQLRRRVSAGMGLTDDGDISFAAADKVNEGLYGVRVMGSGDSYTFFNVTVATETAGDDRDLATVRHVDIAHNIVPSEDRDHVFVSMPRMHVAWPHGTTVLHPKMIIAAASWRPEYNFTYEWYAVPYDGYCATMRLFEACLYHPSAPACLDPAGHRGCVVGTMTHDDLVGRVLMARCRGSDLRTCEPHVIHIKQKPMVSLGRAVPELRVESAAHIPSLYILVVKIDDSVAGWAYTELMAEGSSPRVVIDIHMPRPTSAQGGIAALREIENDDSAPSLGSNEGGGPGNSKRRAAVLGAAVWIALTLLILGGLGAYVAVNKKCLRDKRQWLRGSRKPTLETHAHTYTSLPVGGDLSLEQDAEDEDEDEEELLYERERRRSSSGSKKSSRSPSRRSSRRNSFGPTLSANALSRFDKTVKLAMAEVAGRLLANKTFPSQRY.

Positions 1–20 (MMPATLAGLALAVTVATMFA) are cleaved as a signal peptide. Residues 21–422 (QRVDSTTIHH…GGGPGNSKRR (402 aa)) lie on the Virion surface side of the membrane. 3 N-linked (GlcNAc...) asparagine; by host glycosylation sites follow: N88, N179, and N248. C271 and C280 are oxidised to a cystine. Residues 423–443 (AAVLGAAVWIALTLLILGGLG) form a helical membrane-spanning segment. The Intravirion portion of the chain corresponds to 444–568 (AYVAVNKKCL…ANKTFPSQRY (125 aa)). The Internalization motif motif lies at 465 to 468 (KPTL). Residues 470–534 (THAHTYTSLP…SRRNSFGPTL (65 aa)) are disordered. Positions 482-497 (GDLSLEQDAEDEDEDE) are acidic. Positions 486 to 500 (LEQDAEDEDEDEEEL) are enriched in acidic residues. The span at 515 to 526 (KSSRSPSRRSSR) shows a compositional bias: basic residues.

The protein belongs to the alphaherpesvirinae glycoprotein E family. Interacts with gI. In terms of processing, phosphorylated on serines within the acidic cluster. Phosphorylation determines whether endocytosed viral gE traffics to the trans-Golgi network or recycles to the cell membrane.

It localises to the virion membrane. It is found in the host cell membrane. The protein resides in the host cell junction. The protein localises to the host Golgi apparatus membrane. Its subcellular location is the host endosome membrane. Its function is as follows. In epithelial cells, the heterodimer gE/gI is required for the cell-to-cell spread of the virus, by sorting nascent virions to cell junctions. Once the virus reaches the cell junctions, virus particles can spread to adjacent cells extremely rapidly through interactions with cellular receptors that accumulate at these junctions. Implicated in basolateral spread in polarized cells. In neuronal cells, gE/gI is essential for the anterograde spread of the infection throughout the host nervous system. Together with US9, the heterodimer gE/gI is involved in the sorting and transport of viral structural components toward axon tips. The polypeptide is Envelope glycoprotein E (US8) (Psittacid herpesvirus 1 (isolate Amazon parrot/-/97-0001/1997) (PsHV-1)).